Here is a 607-residue protein sequence, read N- to C-terminus: MLPKLKISAFLLKRLERTKQQCSGCLFGVFYGEGTLLLLSFNIESSLGQLNYEQIQHRFPAELDLCGLVKFGGCTDGEAHLNEVIKSVDITDNPILLQCELGTLVGLRASFFVHGKLEEVPYEVMEAHQLYNDFCFTRLQCGFFLQTAATPESVAREMHVLRKRVADGNLVFNVPQTKIFINNYGPLDKQFSGDSQIQDLIDVIPTPGHEKETASVDKKKLKGQNTPVKRLAPTGCDYEVIPIDVMRSRSRDPVSGEPPHPALSIAVTNEEQIRVQVPLEIEAMAILCRKTKLQRLYDVLIESICRGLRLFELSLIEHLTESGSGKLLVPASYHFYPQEFGHFVSCAYLEGLSDDTPSMLMRRKRLHRQFALPISRPYFRRANQMLFLGETEDAPWTPLLNTHIGLRPSGVVDGKEYLVNGNYHYYHYLQQQVQDKGWGCAYRSLQTICSWFVLQGYTNAPIPTHLEVQEYLHKINDKPAAFVGSSQWIGSTEISMCLQGFLNVDSKILHVASGAELATIASELAMHFQTQGTPVMIGGGVLAHTIIGVDYCVQTGQVKFLILDPHYTGADDLATIQIKGWCGWKGMDFWAKGSYYNLCMPQRPILY.

Residues C440, D564, and H566 contribute to the active site.

This sequence belongs to the peptidase C78 family.

Thiol protease which recognizes and hydrolyzes the peptide bond at the C-terminal Gly of UFM1, a ubiquitin-like modifier protein bound to a number of target proteins. Does not hydrolyze SUMO1 or ISG15 ubiquitin-like proteins. This is Probable Ufm1-specific protease 2 from Drosophila melanogaster (Fruit fly).